The sequence spans 434 residues: UDP-N-acetylmuramate--L-alanine ligase (434 aa).

108-114 (GSHGKTT) is a binding site for ATP.

It belongs to the MurCDEF family.

Its subcellular location is the cytoplasm. It carries out the reaction UDP-N-acetyl-alpha-D-muramate + L-alanine + ATP = UDP-N-acetyl-alpha-D-muramoyl-L-alanine + ADP + phosphate + H(+). The protein operates within cell wall biogenesis; peptidoglycan biosynthesis. Cell wall formation. The polypeptide is UDP-N-acetylmuramate--L-alanine ligase (Geobacillus kaustophilus (strain HTA426)).